A 987-amino-acid chain; its full sequence is UPF0182 protein Lxx09300 (987 aa).

The next 7 membrane-spanning stretches (helical) occupy residues 17 to 37 (VWTT…FAGL), 59 to 79 (AAIA…WVVI), 108 to 128 (RLAM…SAAS), 167 to 187 (VGFA…TCYL), 206 to 226 (VQIS…VWLD), 256 to 276 (AVLA…AFTG), and 283 to 303 (VGTA…PWAI). 2 disordered regions span residues 700–719 (RDDA…DPTL) and 886–947 (TAGD…ALQQ). Low complexity predominate over residues 705–719 (TTPNDPTSSPTDPTL). Gly residues predominate over residues 897–932 (GGSGGGSSGDAGSSAGGGSSGGGGSSAGGSSSGSGS). Residues 933-947 (SGTQSNAALQRALQQ) show a composition bias toward low complexity.

It belongs to the UPF0182 family.

It is found in the cell membrane. This Leifsonia xyli subsp. xyli (strain CTCB07) protein is UPF0182 protein Lxx09300.